Reading from the N-terminus, the 239-residue chain is Probable transcriptional regulatory protein BLi00754/BL02339 (239 aa).

This sequence belongs to the TACO1 family. YeeN subfamily.

It localises to the cytoplasm. The polypeptide is Probable transcriptional regulatory protein BLi00754/BL02339 (Bacillus licheniformis (strain ATCC 14580 / DSM 13 / JCM 2505 / CCUG 7422 / NBRC 12200 / NCIMB 9375 / NCTC 10341 / NRRL NRS-1264 / Gibson 46)).